The primary structure comprises 236 residues: Protein N-lysine methyltransferase METTL21A (236 aa).

S-adenosyl-L-methionine-binding positions include tryptophan 47, 73 to 75 (GAG), aspartate 112, tryptophan 143, and alanine 161.

It belongs to the methyltransferase superfamily. METTL21 family. As to quaternary structure, interacts with heat shock 70 family members; at least some of these proteins are methylation substrates.

Its subcellular location is the cytoplasm. The enzyme catalyses L-lysyl-[protein] + 3 S-adenosyl-L-methionine = N(6),N(6),N(6)-trimethyl-L-lysyl-[protein] + 3 S-adenosyl-L-homocysteine + 3 H(+). Its function is as follows. Protein-lysine methyltransferase that selectively trimethylates residues in heat shock protein 70 (HSP70) family members. Contributes to the in vivo trimethylation of Lys residues in HSPA1 and HSPA8. In vitro methylates 'Lys-561' in HSPA1, 'Lys-564' in HSPA2, 'Lys-585' in HSPA5, 'Lys-563' in HSPA6 and 'Lys-561' in HSPA8. The sequence is that of Protein N-lysine methyltransferase METTL21A (METTL21A) from Pongo abelii (Sumatran orangutan).